A 208-amino-acid chain; its full sequence is Large ribosomal subunit protein bL25 (208 aa).

Positions 1-20 are disordered; that stretch reads MANHQIKAQRRKDEGKGASR.

This sequence belongs to the bacterial ribosomal protein bL25 family. CTC subfamily. As to quaternary structure, part of the 50S ribosomal subunit; part of the 5S rRNA/L5/L18/L25 subcomplex. Contacts the 5S rRNA. Binds to the 5S rRNA independently of L5 and L18.

Functionally, this is one of the proteins that binds to the 5S RNA in the ribosome where it forms part of the central protuberance. The protein is Large ribosomal subunit protein bL25 of Xylella fastidiosa (strain 9a5c).